The following is a 444-amino-acid chain: Acyl-CoA (8-3)-desaturase (444 aa).

Position 1 is an N-acetylmethionine (methionine 1). Residues 1–121 (MAPDPVAAET…FRELRATVER (121 aa)) are Cytoplasmic-facing. The region spanning 17 to 94 (PRYFTWDEVA…MNSLLIGELS (78 aa)) is the Cytochrome b5 heme-binding domain. A helical transmembrane segment spans residues 122 to 142 (MGLMKANHVFFLLYLLHILLL). Over 143–145 (DGA) the chain is Lumenal. A helical membrane pass occupies residues 146–170 (AWLTLWVFGTSFLPFLLCAVLLSAV). At 171-267 (QAQAGWLQHD…PYNHQHKYFF (97 aa)) the chain is on the cytoplasmic side. The short motif at 179 to 183 (HDFGH) is the Histidine box-1 element. Residues 216-220 (HFQHH) carry the Histidine box-2 motif. Residues 268–288 (LIGPPALLPLYFQWYIFYFVI) form a helical membrane-spanning segment. The Lumenal portion of the chain corresponds to 289–305 (QRKKWVDLAWMITFYVR). The helical transmembrane segment at 306 to 326 (FFLTYVPLLGLKAFLGLFFIV) threads the bilayer. The Cytoplasmic portion of the chain corresponds to 327 to 444 (RFLESNWFVW…QLWLDAYLHQ (118 aa)). The Histidine box-3 signature appears at 382–386 (QIEHH).

Belongs to the fatty acid desaturase type 1 family. As to expression, widely expressed, with highest levels in liver, brain, adrenal gland and heart. Highly expressed in fetal liver and brain.

The protein localises to the endoplasmic reticulum membrane. The protein resides in the mitochondrion. It catalyses the reaction (8Z,11Z,14Z)-eicosatrienoyl-CoA + 2 Fe(II)-[cytochrome b5] + O2 + 2 H(+) = (5Z,8Z,11Z,14Z)-eicosatetraenoyl-CoA + 2 Fe(III)-[cytochrome b5] + 2 H2O. It carries out the reaction (8Z,11Z,14Z,17Z)-eicosatetraenoyl-CoA + 2 Fe(II)-[cytochrome b5] + O2 + 2 H(+) = (5Z,8Z,11Z,14Z,17Z)-eicosapentaenoyl-CoA + 2 Fe(III)-[cytochrome b5] + 2 H2O. The catalysed reaction is (11E)-octadecenoyl-CoA + 2 Fe(II)-[cytochrome b5] + O2 + 2 H(+) = (5Z,11E)-octadecadienoyl-CoA + 2 Fe(III)-[cytochrome b5] + 2 H2O. It participates in lipid metabolism; polyunsaturated fatty acid biosynthesis. In terms of biological role, acts as a front-end fatty acyl-coenzyme A (CoA) desaturase that introduces a cis double bond at carbon 5 located between a preexisting double bond and the carboxyl end of the fatty acyl chain. Involved in biosynthesis of highly unsaturated fatty acids (HUFA) from the essential polyunsaturated fatty acids (PUFA) linoleic acid (LA) (18:2n-6) and alpha-linolenic acid (ALA) (18:3n-3) precursors. Specifically, desaturates dihomo-gamma-linoleoate (DGLA) (20:3n-6) and eicosatetraenoate (ETA) (20:4n-3) to generate arachidonate (AA) (20:4n-6) and eicosapentaenoate (EPA) (20:5n-3), respectively. As a rate limiting enzyme for DGLA (20:3n-6) and AA (20:4n-6)-derived eicosanoid biosynthesis, controls the metabolism of inflammatory lipids like prostaglandin E2, critical for efficient acute inflammatory response and maintenance of epithelium homeostasis. Contributes to membrane phospholipid biosynthesis by providing AA (20:4n-6) as a major acyl chain esterified into phospholipids. In particular, regulates phosphatidylinositol-4,5-bisphosphate levels, modulating inflammatory cytokine production in T-cells. Also desaturates (11E)-octadecenoate (trans-vaccenoate)(18:1n-9), a metabolite in the biohydrogenation pathway of LA (18:2n-6). Functionally, does not exhibit any catalytic activity toward 20:3n-6, but it may enhance FADS2 activity. The sequence is that of Acyl-CoA (8-3)-desaturase from Homo sapiens (Human).